The sequence spans 114 residues: Nascent polypeptide-associated complex protein (114 aa).

One can recognise an NAC-A/B domain in the interval 5–69 (PSQFKNLERM…AKEAQKEEPK (65 aa)).

Belongs to the NAC-alpha family. Homodimer. Interacts with the ribosome. Binds ribosomal RNA.

In terms of biological role, contacts the emerging nascent chain on the ribosome. This Sulfurisphaera tokodaii (strain DSM 16993 / JCM 10545 / NBRC 100140 / 7) (Sulfolobus tokodaii) protein is Nascent polypeptide-associated complex protein.